The following is a 546-amino-acid chain: MAKDIEYNETARRKLLEGVNKLANAVKVTLGPKGRNVVIDKKFGAPTITKDGVTVAKEIELEDPLENMGAQMVKEVSTKTNDVAGDGTTTATILAQSIINEGLKNVTAGANPMSLKKGIDKAVTAAVESIQKRAVKIENKKDIANVASISANNDNTIGNLIADAMDKVGKDGVITVEEAKSIETTLDVVEGMQFDRGYISPYMVTDAESMVATLNDPFILIYDKKISSMKDLIHILEKVAQAGKPLVIISEEVEGEALATIVVNTLRKTISCVAVKAPGFGDRRKSMLEDIAILTGGQVISEDLGMKLENTTLQMLGRANKVTVDKENTTIIEGKGQTKEIQGRIGQIKKQIEDTTSEYDREKLQERLAKLAGGVAVIHVGAATEVEMKEKKARVEDALSATRAAVEEGIVPGGGLTLLKAQEAVGSLKLDGDEATGAKIIFRALEEPIRMITSNAGLEGSVIVEHAKAKKGNEGFNALTMVWEDMIQAGVVDPAKVVRSALQNAASIGSMILTTEVTITDKPDKDAPNPMAGMGGGGMGGMGGMM.

ATP is bound by residues 29 to 32, Lys50, 86 to 90, Gly414, 477 to 479, and Asp493; these read TLGP, DGTTT, and NAL.

The protein belongs to the chaperonin (HSP60) family. As to quaternary structure, forms a cylinder of 14 subunits composed of two heptameric rings stacked back-to-back. Interacts with the co-chaperonin GroES.

The protein resides in the cytoplasm. The enzyme catalyses ATP + H2O + a folded polypeptide = ADP + phosphate + an unfolded polypeptide.. Functionally, together with its co-chaperonin GroES, plays an essential role in assisting protein folding. The GroEL-GroES system forms a nano-cage that allows encapsulation of the non-native substrate proteins and provides a physical environment optimized to promote and accelerate protein folding. This is Chaperonin GroEL from Leptospira interrogans serogroup Icterohaemorrhagiae serovar copenhageni (strain Fiocruz L1-130).